Reading from the N-terminus, the 288-residue chain is Acetyl-coenzyme A carboxylase carboxyl transferase subunit beta (288 aa).

One can recognise a CoA carboxyltransferase N-terminal domain in the interval L34–Q288. C38, C41, C56, and C59 together coordinate Zn(2+). A C4-type zinc finger spans residues C38–C59.

The protein belongs to the AccD/PCCB family. As to quaternary structure, acetyl-CoA carboxylase is a heterohexamer composed of biotin carboxyl carrier protein (AccB), biotin carboxylase (AccC) and two subunits each of ACCase subunit alpha (AccA) and ACCase subunit beta (AccD). Requires Zn(2+) as cofactor.

The protein localises to the cytoplasm. The enzyme catalyses N(6)-carboxybiotinyl-L-lysyl-[protein] + acetyl-CoA = N(6)-biotinyl-L-lysyl-[protein] + malonyl-CoA. Its pathway is lipid metabolism; malonyl-CoA biosynthesis; malonyl-CoA from acetyl-CoA: step 1/1. Its function is as follows. Component of the acetyl coenzyme A carboxylase (ACC) complex. Biotin carboxylase (BC) catalyzes the carboxylation of biotin on its carrier protein (BCCP) and then the CO(2) group is transferred by the transcarboxylase to acetyl-CoA to form malonyl-CoA. This chain is Acetyl-coenzyme A carboxylase carboxyl transferase subunit beta, found in Streptococcus pyogenes serotype M3 (strain ATCC BAA-595 / MGAS315).